The following is a 181-amino-acid chain: dTDP-4-dehydrorhamnose 3,5-epimerase (181 aa).

Substrate contacts are provided by residues arginine 23, glutamate 28, 47-49 (QDN), and arginine 59. The active-site Proton acceptor is histidine 62. Lysine 72 and histidine 119 together coordinate substrate. Residue tyrosine 132 is the Proton donor of the active site. Positions 143 and 167 each coordinate substrate.

Belongs to the dTDP-4-dehydrorhamnose 3,5-epimerase family. Homodimer.

It catalyses the reaction dTDP-4-dehydro-6-deoxy-alpha-D-glucose = dTDP-4-dehydro-beta-L-rhamnose. The protein operates within carbohydrate biosynthesis; dTDP-L-rhamnose biosynthesis. It participates in bacterial outer membrane biogenesis; LPS O-antigen biosynthesis. Functionally, catalyzes the epimerization of the C3' and C5'positions of dTDP-6-deoxy-D-xylo-4-hexulose, forming dTDP-6-deoxy-L-lyxo-4-hexulose. The protein is dTDP-4-dehydrorhamnose 3,5-epimerase (rfbC) of Shigella flexneri.